The following is a 207-amino-acid chain: MVFYFTSAVVSPPHTIYMGKDKYENEDLIKYGWPEDIWFHVDKLSSAHVYLRMPKGTTIDDIPKEVLIDCVQLVKNNSIQGCKMNNINIVYTPWSNLKKTADMDIGQIGFHRQKEVKIVAVEKKINEIVNRLEKTKEERYPDLAAEKESRDREERNEKKAQIQEQKKKEKEEVKKKKEMEDLKNYTSLMKSDNMTTNEDGYDSDDFM.

Residues 1–104 are Extracellular-facing; it reads MVFYFTSAVV…SNLKKTADMD (104 aa). Residues 20–24 form a DNA-binding region; the sequence is KDKYE. The chain crosses the membrane as a helical span at residues 105–121; sequence IGQIGFHRQKEVKIVAV. Positions 112–189 form a coiled coil; sequence RQKEVKIVAV…EDLKNYTSLM (78 aa). Topologically, residues 122 to 207 are cytoplasmic; it reads EKKINEIVNR…EDGYDSDDFM (86 aa). Over residues 140–183 the composition is skewed to basic and acidic residues; the sequence is YPDLAAEKESRDREERNEKKAQIQEQKKKEKEEVKKKKEMEDLK. Residues 140-207 form a disordered region; that stretch reads YPDLAAEKES…EDGYDSDDFM (68 aa). The span at 184 to 198 shows a compositional bias: polar residues; that stretch reads NYTSLMKSDNMTTNE. At Ser-203 the chain carries Phosphoserine.

The protein belongs to the CCDC25 family. As to quaternary structure, interacts (via cytoplasmic region) with ILK.

It is found in the cell membrane. It localises to the endomembrane system. Its function is as follows. Transmembrane receptor that senses neutrophil extracellular traps (NETs) and triggers the ILK-PARVB pathway to enhance cell motility. NETs are mainly composed of DNA fibers and are released by neutrophils to bind pathogens during inflammation. Specifically binds NETs on its extracellular region, in particular the 8-OHdG-enriched DNA present in NETs, and recruits ILK, initiating the ILK-PARVB cascade to induce cytoskeleton rearrangement and directional migration of cells. The sequence is that of Coiled-coil domain-containing protein 25 from Danio rerio (Zebrafish).